The primary structure comprises 314 residues: Olfactory receptor 1E16 (314 aa).

Over 1-29 (MTERNKTVISQFLLLGLPIPPEHQQLFYA) the chain is Extracellular. An N-linked (GlcNAc...) asparagine glycan is attached at Asn-5. The chain crosses the membrane as a helical span at residues 30-50 (LFLVMYLTTVLGNLIIIILII). The Cytoplasmic segment spans residues 51–57 (LDSHLHT). The helical transmembrane segment at 58 to 78 (PMYLFLSNLSFSDLCFSSVTM) threads the bilayer. Residues 79–97 (PKLLQNMQSQVPSIPYAGC) lie on the Extracellular side of the membrane. Cys-97 and Cys-179 form a disulfide bridge. The chain crosses the membrane as a helical span at residues 98–118 (LAQIYFFLFFGDLGNFLLVAM). The Cytoplasmic segment spans residues 119 to 143 (AYDRYVAICYPLHYTTIMSPRLCVS). Residues 144–164 (LVVLSWVLTTFHAMLHTLLMA) traverse the membrane as a helical segment. At 165 to 196 (RLSFCEDNVIPHYFCDMSALLKLACSDTRVNE) the chain is on the extracellular side. Residues 197–217 (VVIFIVASIFLVLPFALITMS) traverse the membrane as a helical segment. Topologically, residues 218 to 239 (YVRIVSSILKVPSSQGIYKAFS) are cytoplasmic. A helical membrane pass occupies residues 240-260 (TCGSHLSVVSLFYGTVIGLYL). Residues 261 to 271 (SPSSNNSTVKD) are Extracellular-facing. N-linked (GlcNAc...) asparagine glycosylation is found at Asn-265 and Asn-266. A helical transmembrane segment spans residues 272–292 (TVMSLMYTVVTPMLNPFIYSL). Residues 293-314 (RNRDIKGALERVFCKRKIQLNL) lie on the Cytoplasmic side of the membrane.

The protein belongs to the G-protein coupled receptor 1 family. Olfactory epithelium.

It is found in the cell membrane. Its function is as follows. Odorant receptor. Activated by a lily-derived aldehyde as well as other odorants. May signal through an inositol 1,4,5-trisphosphate (IP3) second messenger system. This chain is Olfactory receptor 1E16, found in Mus musculus (Mouse).